A 126-amino-acid chain; its full sequence is Fatty acid-binding protein, liver (126 aa).

A2 carries the N-acetylalanine modification. Cholate contacts are provided by K77, H99, and Q101.

This sequence belongs to the calycin superfamily. Fatty-acid binding protein (FABP) family.

Its subcellular location is the cytoplasm. In terms of biological role, binds free fatty acids and their coenzyme A derivatives, bilirubin, and some other small molecules in the cytoplasm. May be involved in intracellular lipid transport. The protein is Fatty acid-binding protein, liver (fabp1) of Aquarana catesbeiana (American bullfrog).